The chain runs to 68 residues: MESEMATAKELKELSADDLKQRAAELRETLFQDQLKRRTGSLDNPAERTQHRRDLARVLTVLTQKTKA.

Residues 32–68 (QDQLKRRTGSLDNPAERTQHRRDLARVLTVLTQKTKA) are disordered. Over residues 45–56 (PAERTQHRRDLA) the composition is skewed to basic and acidic residues.

It belongs to the universal ribosomal protein uL29 family.

This is Large ribosomal subunit protein uL29 from Myxococcus xanthus (strain DK1622).